The primary structure comprises 227 residues: Ribose-5-phosphate isomerase A (227 aa).

Residues 26 to 29, 82 to 85, and 95 to 98 each bind substrate; these read TGST, DGAD, and KGGG. Glutamate 104 (proton acceptor) is an active-site residue. Lysine 122 is a substrate binding site.

The protein belongs to the ribose 5-phosphate isomerase family. In terms of assembly, homodimer.

It catalyses the reaction aldehydo-D-ribose 5-phosphate = D-ribulose 5-phosphate. Its pathway is carbohydrate degradation; pentose phosphate pathway; D-ribose 5-phosphate from D-ribulose 5-phosphate (non-oxidative stage): step 1/1. Functionally, catalyzes the reversible conversion of ribose-5-phosphate to ribulose 5-phosphate. This chain is Ribose-5-phosphate isomerase A, found in Streptococcus pneumoniae serotype 4 (strain ATCC BAA-334 / TIGR4).